The sequence spans 118 residues: Myotrophin (118 aa).

3 ANK repeats span residues 1–30 (MSDK…DVNR), 34–65 (GGRK…NAPD), and 67–98 (HNIT…TVKG).

It belongs to the myotrophin family.

It is found in the cytoplasm. The protein localises to the nucleus. The protein resides in the perinuclear region. Functionally, regulates NF-kappa-B transcription factor activity. Promotes growth of cardiomyocytes, but not cardiomyocyte proliferation. Promotes cardiac muscle hypertrophy. Plays a role in the regulation of the growth of actin filaments. Inhibits the activity of the F-actin-capping protein complex. The polypeptide is Myotrophin (MTPN) (Gallus gallus (Chicken)).